The primary structure comprises 563 residues: Arginine--tRNA ligase (563 aa).

Residues 122–132 carry the 'HIGH' region motif; that stretch reads PNIAKPMSMGH.

Belongs to the class-I aminoacyl-tRNA synthetase family. As to quaternary structure, monomer.

Its subcellular location is the cytoplasm. The enzyme catalyses tRNA(Arg) + L-arginine + ATP = L-arginyl-tRNA(Arg) + AMP + diphosphate. The polypeptide is Arginine--tRNA ligase (Levilactobacillus brevis (strain ATCC 367 / BCRC 12310 / CIP 105137 / JCM 1170 / LMG 11437 / NCIMB 947 / NCTC 947) (Lactobacillus brevis)).